Here is a 130-residue protein sequence, read N- to C-terminus: Large ribosomal subunit protein bL19 (130 aa).

The protein belongs to the bacterial ribosomal protein bL19 family.

In terms of biological role, this protein is located at the 30S-50S ribosomal subunit interface and may play a role in the structure and function of the aminoacyl-tRNA binding site. This chain is Large ribosomal subunit protein bL19, found in Gluconobacter oxydans (strain 621H) (Gluconobacter suboxydans).